We begin with the raw amino-acid sequence, 144 residues long: Large ribosomal subunit protein uL15 (144 aa).

The interval 1-48 (MQLNNLKPAAGSKHAKRRVGRGIGSGLGKTAGRGHKGQKSRSGGFHKV) is disordered. Gly residues predominate over residues 21-31 (RGIGSGLGKTA).

The protein belongs to the universal ribosomal protein uL15 family. Part of the 50S ribosomal subunit.

In terms of biological role, binds to the 23S rRNA. The polypeptide is Large ribosomal subunit protein uL15 (Cupriavidus pinatubonensis (strain JMP 134 / LMG 1197) (Cupriavidus necator (strain JMP 134))).